The sequence spans 199 residues: Phosphatidylethanolamine N-methyltransferase (199 aa).

At 2 to 12 (SWLLGYVDPTE) the chain is on the lumenal side. Positions 13-33 (PSFVAAVLTIVFNPLFWNVVA) form an intramembrane region, helical. Residues 34 to 45 (RWEQRTRKLSRA) are Lumenal-facing. The chain crosses the membrane as a helical span at residues 46–66 (FGSPYLACYSLGSIILLLNIL). Residues 67–93 (RSHCFTQAMMSQPKMEGLDSHTIYFLG) lie on the Cytoplasmic side of the membrane. A helical transmembrane segment spans residues 94-114 (LALLGWGLVFVLSSFYALGFT). 98-100 (GWG) is an S-adenosyl-L-methionine binding site. Over 115-157 (GTFLGDYFGILKESRVTTFPFSVLDNPMYWGSTANYLGWALMH) the chain is Lumenal. Residues 158–178 (ASPTGLLLTVLVALVYVVALL) traverse the membrane as a helical segment. The Cytoplasmic portion of the chain corresponds to 179–199 (FEEPFTAEIYRRKATRLHKRS). Position 180–181 (180–181 (EE)) interacts with S-adenosyl-L-methionine.

It belongs to the class VI-like SAM-binding methyltransferase superfamily. PEMT/PEM2 methyltransferase family. In terms of tissue distribution, expressed in liver (at protein level).

The protein resides in the endoplasmic reticulum membrane. It is found in the mitochondrion membrane. The catalysed reaction is a 1,2-diacyl-sn-glycero-3-phosphoethanolamine + S-adenosyl-L-methionine = a 1,2-diacyl-sn-glycero-3-phospho-N-methylethanolamine + S-adenosyl-L-homocysteine + H(+). It catalyses the reaction a 1,2-diacyl-sn-glycero-3-phospho-N-methylethanolamine + S-adenosyl-L-methionine = a 1,2-diacyl-sn-glycero-3-phospho-N,N-dimethylethanolamine + S-adenosyl-L-homocysteine + H(+). The enzyme catalyses a 1,2-diacyl-sn-glycero-3-phospho-N,N-dimethylethanolamine + S-adenosyl-L-methionine = a 1,2-diacyl-sn-glycero-3-phosphocholine + S-adenosyl-L-homocysteine + H(+). It carries out the reaction 1,2-di-(9Z-octadecenoyl)-sn-glycero-3-phosphoethanolamine + S-adenosyl-L-methionine = 1,2-di-(9Z-octadecenoyl)-sn-glycero-3-phospho-N-methylethanolamine + S-adenosyl-L-homocysteine + H(+). The catalysed reaction is 1,2-di-(9Z-octadecenoyl)-sn-glycero-3-phospho-N-methylethanolamine + S-adenosyl-L-methionine = 1,2-di-(9Z-octadecenoyl)-sn-glycero-3-phospho-N,N-dimethylethanolamine + S-adenosyl-L-homocysteine + H(+). It catalyses the reaction 1,2-di-(9Z-octadecenoyl)-sn-glycero-3-phospho-N,N-dimethylethanolamine + S-adenosyl-L-methionine = 1,2-di-(9Z-octadecenoyl)-sn-glycero-3-phosphocholine + S-adenosyl-L-homocysteine + H(+). The enzyme catalyses 1,2-di-(9Z,12Z-octadecadienoyl)-sn-glycero-3-phosphoethanolamine + S-adenosyl-L-methionine = 1,2-di-(9Z,12Z-octadecadienoyl)-sn-glycero-3-phospho-N-methylethanolamine + S-adenosyl-L-homocysteine + H(+). It carries out the reaction 1,2-di-(9Z,12Z-octadecadienoyl)-sn-glycero-3-phospho-N-methylethanolamine + S-adenosyl-L-methionine = 1,2-di-(9Z,12Z-octadecadienoyl)-sn-glycero-3-phospho-N,N-dimethylethanolamine + S-adenosyl-L-homocysteine + H(+). The catalysed reaction is 1,2-di-(9Z,12Z-octadecadienoyl)-sn-glycero-3-phospho-N,N-dimethylethanolamine + S-adenosyl-L-methionine = 1,2-di-(9Z,12Z-octadecadienoyl)-sn-glycero-3-phosphocholine + S-adenosyl-L-homocysteine + H(+). It catalyses the reaction 1,2-di-(9Z,12Z,15Z-octadecatrienoyl)-sn-glycero-3-phosphoethanolamine + S-adenosyl-L-methionine = 1,2-di-(9Z,12Z,15Z-octadecatrienoyl)-sn-glycero-3-phospho-N-methylethanolamine + S-adenosyl-L-homocysteine + H(+). The enzyme catalyses 1,2-di-(9Z,12Z,15Z-octadecatrienoyl)-sn-glycero-3-phospho-N-methylethanolamine + S-adenosyl-L-methionine = 1,2-di-(9Z,12Z,15Z-octadecatrienoyl)-sn-glycero-3-phospho-N,N-dimethylethanolamine + S-adenosyl-L-homocysteine + H(+). It carries out the reaction 1,2-di-(9Z,12Z,15Z-octadecatrienoyl)-sn-glycero-3-phospho-N,N-dimethylethanolamine + S-adenosyl-L-methionine = 1,2-di-(9Z,12Z,15Z-octadecatrienoyl)-sn-glycero-3-phosphocholine + S-adenosyl-L-homocysteine + H(+). The catalysed reaction is 1-hexadecanoyl-2-(4Z,7Z,10Z,13Z,16Z,19Z-docosahexaenoyl)-sn-glycero-3-phosphoethanolamine + S-adenosyl-L-methionine = 1-hexadecanoyl-2-(4Z,7Z,10Z,13Z,16Z,19Z-docosahexaenoyl)-sn-glycero-3-phospho-N-methylethanolamine + S-adenosyl-L-homocysteine + H(+). It catalyses the reaction 1-hexadecanoyl-2-(4Z,7Z,10Z,13Z,16Z,19Z-docosahexaenoyl)-sn-glycero-3-phospho-N-methylethanolamine + S-adenosyl-L-methionine = 1-hexadecanoyl-2-(4Z,7Z,10Z,13Z,16Z,19Z-docosahexaenoyl)-sn-glycero-3-phospho-N,N-dimethylethanolamine + S-adenosyl-L-homocysteine + H(+). The enzyme catalyses 1-hexadecanoyl-2-(4Z,7Z,10Z,13Z,16Z,19Z-docosahexaenoyl)-sn-glycero-3-phospho-N,N-dimethylethanolamine + S-adenosyl-L-methionine = 1-hexadecanoyl-2-(4Z,7Z,10Z,13Z,16Z,19Z-docosahexaenoyl)-sn-glycero-3-phosphocholine + S-adenosyl-L-homocysteine + H(+). Its pathway is phospholipid metabolism; phosphatidylcholine biosynthesis. Its function is as follows. Catalyzes the three sequential steps of the methylation pathway for the biosynthesis of phosphatidylcholine, a critical and essential component for membrane structure. Uses S-adenosylmethionine (S-adenosyl-L-methionine, SAM or AdoMet) as the methyl group donor for the methylation of phosphatidylethanolamine (1,2-diacyl-sn-glycero-3-phosphoethanolamine, PE) to phosphatidylmonomethylethanolamine (1,2-diacyl-sn-glycero-3-phospho-N-methylethanolamine, PMME), PMME to phosphatidyldimethylethanolamine (1,2-diacyl-sn-glycero-3-phospho-N,N-dimethylethanolamine, PDME), and PDME to phosphatidylcholine (1,2-diacyl-sn-glycero-3-phosphocholine, PC), producing S-adenosyl-L-homocysteine in each step. This is Phosphatidylethanolamine N-methyltransferase from Rattus norvegicus (Rat).